The primary structure comprises 857 residues: Putative serine/threonine-protein kinase receptor (857 aa).

Residues 1 to 32 form the signal peptide; the sequence is MKGARNIYHHSYMSFLLVFVVMILIHPALSIY. Residues 33–446 are Extracellular-facing; that stretch reads INTLSSTESL…IAKKRNASGK (414 aa). Positions 35 to 155 constitute a Bulb-type lectin domain; it reads TLSSTESLTI…SNNDASEYLW (121 aa). N-linked (GlcNAc...) asparagine glycans are attached at residues Asn47, Asn120, Asn196, Asn260, Asn389, and Asn442. In terms of domain architecture, PAN spans 350–433; it reads CSGDGFTRMK…DGQDLYVRLA (84 aa). Cystine bridges form between Cys380–Cys405 and Cys388–Cys390. Residues 447–466 form a helical membrane-spanning segment; it reads IISLTVGVSVLLLLIMFCLW. The Cytoplasmic portion of the chain corresponds to 467-857; that stretch reads KRKQKRAKAS…QYTCSVIDAR (391 aa). Residues 528–779 enclose the Protein kinase domain; sequence FSSCNKLGQG…PSIFQPQEVL (252 aa). ATP is bound by residues 534-542 and Lys556; that span reads LGQGGFGIV. Residue Asp653 is the Proton acceptor of the active site.

This sequence belongs to the protein kinase superfamily. Ser/Thr protein kinase family. As to expression, predominantly in the pistil and anther.

The protein resides in the membrane. The catalysed reaction is L-seryl-[protein] + ATP = O-phospho-L-seryl-[protein] + ADP + H(+). The enzyme catalyses L-threonyl-[protein] + ATP = O-phospho-L-threonyl-[protein] + ADP + H(+). Involved in sporophytic self-incompatibility system (the inability of flowering plants to achieve self-fertilization), probably acting in combination with S-locus-specific glycoproteins. Interaction with a ligand in the extracellular domain triggers the protein kinase activity of the cytoplasmic domain. This Brassica oleracea var. viridis (Flowering kale) protein is Putative serine/threonine-protein kinase receptor (SRK6).